A 318-amino-acid chain; its full sequence is Nuclear egress protein 1 (318 aa).

The segment at 129–239 (CLRLSPFGHS…HLLLQGTSLH (111 aa)) adopts a CCCH-type zinc-finger fold.

The protein belongs to the herpesviridae NEC1 protein family. Forms a heterodimeric viral nuclear egress complex (NEC) with NEC2. Interacts with capsid vertex specific component 2/CVC2; this interaction directs the capsid to the host inner nuclear membrane to initiate budding. In terms of processing, phosphorylated at serine residues in the N-terminus. This phosphorylation regulates the localization within the inner nuclear membrane.

It is found in the host nucleus inner membrane. Its function is as follows. Plays an essential role in virion nuclear egress, the first step of virion release from infected cell. Within the host nucleus, NEC1 interacts with the newly formed capsid through the vertexes and directs it to the inner nuclear membrane by associating with NEC2. Induces the budding of the capsid at the inner nuclear membrane as well as its envelopment into the perinuclear space. There, the NEC1/NEC2 complex promotes the fusion of the enveloped capsid with the outer nuclear membrane and the subsequent release of the viral capsid into the cytoplasm where it will reach the secondary budding sites in the host Golgi or trans-Golgi network. This is Nuclear egress protein 1 from Homo sapiens (Human).